Here is an 85-residue protein sequence, read N- to C-terminus: Putative membrane protein insertion efficiency factor (85 aa).

The protein belongs to the UPF0161 family.

The protein localises to the cell inner membrane. Functionally, could be involved in insertion of integral membrane proteins into the membrane. In Vibrio cholerae serotype O1 (strain ATCC 39315 / El Tor Inaba N16961), this protein is Putative membrane protein insertion efficiency factor.